A 542-amino-acid chain; its full sequence is Isocitrate lyase (542 aa).

A substrate-binding site is contributed by 102–104 (SGW). Asp170 provides a ligand contact to Mg(2+). Cys208 functions as the Proton acceptor in the catalytic mechanism. Substrate is bound by residues 209-210 (GH), Arg245, 428-432 (NLSPS), and Thr462.

Belongs to the isocitrate lyase/PEP mutase superfamily. Isocitrate lyase family. Homotetramer. The cofactor is Mg(2+).

The protein resides in the glyoxysome. The enzyme catalyses D-threo-isocitrate = glyoxylate + succinate. The catalysed reaction is (2S,3R)-3-hydroxybutane-1,2,3-tricarboxylate = pyruvate + succinate. It functions in the pathway carbohydrate metabolism; glyoxylate cycle; (S)-malate from isocitrate: step 1/2. Functionally, catalyzes the formation of succinate and glyoxylate from isocitrate, a key step of the glyoxylate cycle, which operates as an anaplerotic route for replenishing the tricarboxylic acid cycle. Required for growth on ethanol or acetate, but dispensable when fermentable carbon sources are available. Also acts on 2-methylisocitrate. This is Isocitrate lyase from Kluyveromyces lactis (strain ATCC 8585 / CBS 2359 / DSM 70799 / NBRC 1267 / NRRL Y-1140 / WM37) (Yeast).